A 395-amino-acid polypeptide reads, in one-letter code: Tyrosine--tRNA ligase (395 aa).

A 'HIGH' region motif is present at residues 42-51 (PTAPDIHLGH). The short motif at 226-230 (KMSKS) is the 'KMSKS' region element. ATP is bound at residue K229. The S4 RNA-binding domain maps to 334 to 394 (IGLANLLKEA…GKRKFARVTV (61 aa)).

The protein belongs to the class-I aminoacyl-tRNA synthetase family. TyrS type 2 subfamily. Homodimer.

Its subcellular location is the cytoplasm. The enzyme catalyses tRNA(Tyr) + L-tyrosine + ATP = L-tyrosyl-tRNA(Tyr) + AMP + diphosphate + H(+). Catalyzes the attachment of tyrosine to tRNA(Tyr) in a two-step reaction: tyrosine is first activated by ATP to form Tyr-AMP and then transferred to the acceptor end of tRNA(Tyr). The chain is Tyrosine--tRNA ligase from Mannheimia succiniciproducens (strain KCTC 0769BP / MBEL55E).